The following is a 139-amino-acid chain: Nucleoside diphosphate kinase (139 aa).

ATP is bound by residues lysine 10, phenylalanine 58, arginine 86, threonine 92, arginine 103, and asparagine 113. Histidine 116 (pros-phosphohistidine intermediate) is an active-site residue.

The protein belongs to the NDK family. As to quaternary structure, homotetramer. The cofactor is Mg(2+).

The protein localises to the cytoplasm. The catalysed reaction is a 2'-deoxyribonucleoside 5'-diphosphate + ATP = a 2'-deoxyribonucleoside 5'-triphosphate + ADP. It catalyses the reaction a ribonucleoside 5'-diphosphate + ATP = a ribonucleoside 5'-triphosphate + ADP. Major role in the synthesis of nucleoside triphosphates other than ATP. The ATP gamma phosphate is transferred to the NDP beta phosphate via a ping-pong mechanism, using a phosphorylated active-site intermediate. The chain is Nucleoside diphosphate kinase from Phenylobacterium zucineum (strain HLK1).